Consider the following 375-residue polypeptide: SAP-like protein BP-73 (375 aa).

3 disordered regions span residues 46-113 (PNNH…VPGE), 130-233 (RARG…VKFQ), and 257-315 (TLEN…PSLQ). The span at 59–70 (HQKGGSARRKSK) shows a compositional bias: basic residues. Residues 76 to 86 (DDSENIDEFDT) are compositionally biased toward acidic residues. The segment covering 88 to 109 (IMSSKNGPPISLTSNSRPQATS) has biased composition (polar residues). Basic and acidic residues-rich tracts occupy residues 134 to 152 (KGKE…ERGS) and 163 to 186 (HSVD…KRSN). The segment covering 187–197 (ESGNKQNSSIF) has biased composition (polar residues). The segment covering 295–311 (DEPDASDTDEPSGEYDE) has biased composition (acidic residues). Residues 338 to 375 (DLSTLKVTELRELAKSRGIKGYSKMKKNDLVELLSNMA) form an interaction with WAXY region.

Binds to the DNA in the promoter region of WAXY containing the sequence 5'-ACGCACGCTAACGTGA-3'. As to expression, expressed in tissues with high cell division activities: in root tips, stem node, panicle, flower and immature seed. Weakly expressed in root and leaf.

Functionally, may regulate cell proliferation and plant growth. The chain is SAP-like protein BP-73 (BP-73) from Oryza sativa subsp. japonica (Rice).